We begin with the raw amino-acid sequence, 179 residues long: ATP synthase subunit delta (179 aa).

The protein belongs to the ATPase delta chain family. F-type ATPases have 2 components, F(1) - the catalytic core - and F(0) - the membrane proton channel. F(1) has five subunits: alpha(3), beta(3), gamma(1), delta(1), epsilon(1). F(0) has three main subunits: a(1), b(2) and c(10-14). The alpha and beta chains form an alternating ring which encloses part of the gamma chain. F(1) is attached to F(0) by a central stalk formed by the gamma and epsilon chains, while a peripheral stalk is formed by the delta and b chains.

It is found in the cell inner membrane. In terms of biological role, f(1)F(0) ATP synthase produces ATP from ADP in the presence of a proton or sodium gradient. F-type ATPases consist of two structural domains, F(1) containing the extramembraneous catalytic core and F(0) containing the membrane proton channel, linked together by a central stalk and a peripheral stalk. During catalysis, ATP synthesis in the catalytic domain of F(1) is coupled via a rotary mechanism of the central stalk subunits to proton translocation. Functionally, this protein is part of the stalk that links CF(0) to CF(1). It either transmits conformational changes from CF(0) to CF(1) or is implicated in proton conduction. The chain is ATP synthase subunit delta from Burkholderia lata (strain ATCC 17760 / DSM 23089 / LMG 22485 / NCIMB 9086 / R18194 / 383).